We begin with the raw amino-acid sequence, 191 residues long: UPF0302 protein SA1295 (191 aa).

Belongs to the UPF0302 family.

This chain is UPF0302 protein SA1295, found in Staphylococcus aureus (strain N315).